We begin with the raw amino-acid sequence, 386 residues long: Chorismate synthase (386 aa).

Residues 32–60 (LPLSEDDVQRELDRRRPGQSGVSTPRSER) form a disordered region. The segment covering 38–47 (DVQRELDRRR) has biased composition (basic and acidic residues). An NADP(+)-binding site is contributed by Arg46. Residues 123 to 125 (RAS), Gly290, 305 to 309 (KPTPS), and Arg332 each bind FMN.

This sequence belongs to the chorismate synthase family. FMNH2 is required as a cofactor.

The catalysed reaction is 5-O-(1-carboxyvinyl)-3-phosphoshikimate = chorismate + phosphate. It functions in the pathway metabolic intermediate biosynthesis; chorismate biosynthesis; chorismate from D-erythrose 4-phosphate and phosphoenolpyruvate: step 7/7. Functionally, catalyzes the anti-1,4-elimination of the C-3 phosphate and the C-6 proR hydrogen from 5-enolpyruvylshikimate-3-phosphate (EPSP) to yield chorismate, which is the branch point compound that serves as the starting substrate for the three terminal pathways of aromatic amino acid biosynthesis. This reaction introduces a second double bond into the aromatic ring system. The sequence is that of Chorismate synthase from Methanopyrus kandleri (strain AV19 / DSM 6324 / JCM 9639 / NBRC 100938).